The primary structure comprises 423 residues: Protein CLP1 homolog (423 aa).

ATP is bound by residues Glu16, Lys57, and 119–124 (DVGKST).

Belongs to the Clp1 family. Clp1 subfamily.

It is found in the nucleus. Functionally, required for endonucleolytic cleavage during polyadenylation-dependent pre-mRNA 3'-end formation. The polypeptide is Protein CLP1 homolog (cbc) (Drosophila sechellia (Fruit fly)).